A 262-amino-acid polypeptide reads, in one-letter code: Phosphonates import ATP-binding protein PhnC (262 aa).

The ABC transporter domain occupies 5-253; the sequence is IRVEKLAKTF…RFDHLYRSIN (249 aa). 37-44 is a binding site for ATP; the sequence is GPSGSGKS.

Belongs to the ABC transporter superfamily. Phosphonates importer (TC 3.A.1.9.1) family. As to quaternary structure, the complex is composed of two ATP-binding proteins (PhnC), two transmembrane proteins (PhnE) and a solute-binding protein (PhnD).

Its subcellular location is the cell inner membrane. The catalysed reaction is phosphonate(out) + ATP + H2O = phosphonate(in) + ADP + phosphate + H(+). Functionally, part of the ABC transporter complex PhnCDE involved in phosphonates import. Responsible for energy coupling to the transport system. This is Phosphonates import ATP-binding protein PhnC from Shigella sonnei (strain Ss046).